Here is a 210-residue protein sequence, read N- to C-terminus: Thiamine-phosphate synthase (210 aa).

4-amino-2-methyl-5-(diphosphooxymethyl)pyrimidine-binding positions include 39–43 (QLREK) and Asn-71. Mg(2+) contacts are provided by Asp-72 and Asp-91. Ser-110 contacts 4-amino-2-methyl-5-(diphosphooxymethyl)pyrimidine. 134-136 (TPT) is a 2-[(2R,5Z)-2-carboxy-4-methylthiazol-5(2H)-ylidene]ethyl phosphate binding site. Lys-137 is a 4-amino-2-methyl-5-(diphosphooxymethyl)pyrimidine binding site. Gly-163 contributes to the 2-[(2R,5Z)-2-carboxy-4-methylthiazol-5(2H)-ylidene]ethyl phosphate binding site.

This sequence belongs to the thiamine-phosphate synthase family. Requires Mg(2+) as cofactor.

The catalysed reaction is 2-[(2R,5Z)-2-carboxy-4-methylthiazol-5(2H)-ylidene]ethyl phosphate + 4-amino-2-methyl-5-(diphosphooxymethyl)pyrimidine + 2 H(+) = thiamine phosphate + CO2 + diphosphate. The enzyme catalyses 2-(2-carboxy-4-methylthiazol-5-yl)ethyl phosphate + 4-amino-2-methyl-5-(diphosphooxymethyl)pyrimidine + 2 H(+) = thiamine phosphate + CO2 + diphosphate. It carries out the reaction 4-methyl-5-(2-phosphooxyethyl)-thiazole + 4-amino-2-methyl-5-(diphosphooxymethyl)pyrimidine + H(+) = thiamine phosphate + diphosphate. It functions in the pathway cofactor biosynthesis; thiamine diphosphate biosynthesis; thiamine phosphate from 4-amino-2-methyl-5-diphosphomethylpyrimidine and 4-methyl-5-(2-phosphoethyl)-thiazole: step 1/1. Functionally, condenses 4-methyl-5-(beta-hydroxyethyl)thiazole monophosphate (THZ-P) and 2-methyl-4-amino-5-hydroxymethyl pyrimidine pyrophosphate (HMP-PP) to form thiamine monophosphate (TMP). The chain is Thiamine-phosphate synthase from Campylobacter jejuni (strain RM1221).